Here is a 248-residue protein sequence, read N- to C-terminus: Anamorsin homolog (248 aa).

Positions 4 to 129 (FKGLQKSLYI…ETGSSARLSF (126 aa)) are N-terminal SAM-like domain. The tract at residues 130-161 (AKKNANAANVWKISGDDEELIDEEELLDEEDK) is linker. [2Fe-2S] cluster-binding residues include Cys-172, Cys-181, Cys-184, and Cys-186. Positions 172-186 (CSTTGKRKACKNCSC) are fe-S binding site A. [4Fe-4S] cluster contacts are provided by Cys-209, Cys-212, Cys-220, and Cys-223. Short sequence motifs (cx2C motif) lie at residues 209–212 (CGNC) and 220–223 (CSTC). Residues 209–223 (CGNCYLGDAFRCSTC) form a fe-S binding site B region.

The protein belongs to the anamorsin family. In terms of assembly, monomer. The cofactor is [2Fe-2S] cluster. Requires [4Fe-4S] cluster as cofactor.

It localises to the cytoplasm. The protein localises to the mitochondrion intermembrane space. Functionally, component of the cytosolic iron-sulfur (Fe-S) protein assembly (CIA) machinery. Required for the maturation of extramitochondrial Fe-S proteins. Part of an electron transfer chain functioning in an early step of cytosolic Fe-S biogenesis, facilitating the de novo assembly of a [4Fe-4S] cluster on the cytosolic Fe-S scaffold complex. Electrons are transferred from NADPH via a FAD- and FMN-containing diflavin oxidoreductase. Together with the diflavin oxidoreductase, also required for the assembly of the diferric tyrosyl radical cofactor of ribonucleotide reductase (RNR), probably by providing electrons for reduction during radical cofactor maturation in the catalytic small subunit. This chain is Anamorsin homolog, found in Drosophila sechellia (Fruit fly).